Consider the following 386-residue polypeptide: Protein phosphatase methylesterase 1 (386 aa).

The interval 20–48 (ILEKLKGGQEPNSNEEGSDSIGDLPSLKN) is disordered. Catalysis depends on residues Ser194, Asp222, and His348.

This sequence belongs to the AB hydrolase superfamily.

It catalyses the reaction [phosphatase 2A protein]-C-terminal L-leucine methyl ester + H2O = [phosphatase 2A protein]-C-terminal L-leucine + methanol + H(+). Its function is as follows. Demethylates proteins that have been reversibly carboxymethylated. Demethylates the phosphatase PP2A catalytic subunit. The chain is Protein phosphatase methylesterase 1 (PPE1) from Candida glabrata (strain ATCC 2001 / BCRC 20586 / JCM 3761 / NBRC 0622 / NRRL Y-65 / CBS 138) (Yeast).